Here is a 301-residue protein sequence, read N- to C-terminus: MGRAREMGWMAAGLMIGAGACYCMYKLTMGRDEGNELENEEEDEWDDEQDLDEEEADIWFDFTAMARPWSEDGEWDEPGAPGGTEDRRSGGGKANRAHPTKQRPFPYEHKNIWGVQSFQTFPCALNLTKCAFSQGKKMFTESTIAGFSLTHNVSRHLSSLSVVGSRSPTPQPTVREKALDVPEHPNSSIENQDQIKMYIDEVCRDAVFCCCKSFLQQAGLGLLISMTVINNMLAKSLSDPKFPLLSEGSGCAKVQGLEAQMSLPEKPVLAEEVLAAQMLFSFMCLFTRSGSREMLVEAISP.

The tract at residues methionine 1 to glutamate 6 is mitochondrion outer membrane (MOM)-targeting sequence. At methionine 1–methionine 7 the chain is on the mitochondrial intermembrane side. A helical; Signal-anchor transmembrane segment spans residues glycine 8 to tyrosine 25. Residues lysine 26–glutamate 36 form a mitochondrion outer membrane (MOM)-targeting sequence region. The Cytoplasmic segment spans residues lysine 26 to proline 301. Residues serine 70 to phenylalanine 105 are disordered.

It belongs to the eutherian X-chromosome-specific Armcx family.

It localises to the mitochondrion. It is found in the mitochondrion outer membrane. Its function is as follows. May regulate the dynamics and distribution of mitochondria in neural cells. This Rattus norvegicus (Rat) protein is Protein ARMCX6 (Armcx6).